The following is an 822-amino-acid chain: DNA-directed RNA polymerase subunit beta N-terminal section (822 aa).

Positions 376–408 (ELTEGNPSSKSQTKNKTSASKKSKTLNVANTKG) are disordered. Positions 383–393 (SSKSQTKNKTS) are enriched in low complexity.

It belongs to the RNA polymerase beta chain family. In plastids the minimal PEP RNA polymerase catalytic core is composed of four subunits: alpha, beta, beta', and beta''. When a (nuclear-encoded) sigma factor is associated with the core the holoenzyme is formed, which can initiate transcription.

It is found in the plastid. It localises to the chloroplast. The enzyme catalyses RNA(n) + a ribonucleoside 5'-triphosphate = RNA(n+1) + diphosphate. Functionally, DNA-dependent RNA polymerase catalyzes the transcription of DNA into RNA using the four ribonucleoside triphosphates as substrates. This chain is DNA-directed RNA polymerase subunit beta N-terminal section (rpoB1), found in Chlamydomonas reinhardtii (Chlamydomonas smithii).